Reading from the N-terminus, the 301-residue chain is tRNA dimethylallyltransferase (301 aa).

An ATP-binding site is contributed by 8–15; sequence GPTAVGKT. 10–15 provides a ligand contact to substrate; sequence TAVGKT. Residues 33 to 36 are interaction with substrate tRNA; that stretch reads DSRQ.

It belongs to the IPP transferase family. As to quaternary structure, monomer. The cofactor is Mg(2+).

It catalyses the reaction adenosine(37) in tRNA + dimethylallyl diphosphate = N(6)-dimethylallyladenosine(37) in tRNA + diphosphate. In terms of biological role, catalyzes the transfer of a dimethylallyl group onto the adenine at position 37 in tRNAs that read codons beginning with uridine, leading to the formation of N6-(dimethylallyl)adenosine (i(6)A). The protein is tRNA dimethylallyltransferase of Thermosipho melanesiensis (strain DSM 12029 / CIP 104789 / BI429).